We begin with the raw amino-acid sequence, 69 residues long: MHLWQLVLLVILFFGAAFGADLEGSGSGDVSTDAKEAILNAQTLLDAVSSDGSGADVEASGEDVQTFFF.

Positions 1–19 (MHLWQLVLLVILFFGAAFG) are cleaved as a signal peptide. O-linked (Xyl...) (chondroitin sulfate) serine glycans are attached at residues Ser-25 and Ser-27.

This chain is Chondroitin proteoglycan 9, found in Caenorhabditis elegans.